The primary structure comprises 500 residues: NF-kappa-B inhibitor cactus (500 aa).

The span at 1-43 (MPSPTKAAEAATKATATSDCSCSAASVEQRAPSNAANPSSSLA) shows a compositional bias: low complexity. 2 disordered regions span residues 1–148 (MPSP…MRLK) and 171–212 (LNNL…APPS). Serine 45 is subject to Phosphoserine; by PKC. The span at 69 to 86 (NETSDSGFISGPQSSQIF) shows a compositional bias: polar residues. Over residues 118 to 130 (IIDEEEDQEEQEK) the composition is skewed to acidic residues. Serine 144 bears the Phosphoserine; by PKC mark. The span at 171–189 (LNNLGQSSSTQITGRSKVQ) shows a compositional bias: polar residues. Position 183 is a phosphothreonine; by PKC (threonine 183). Residues 190 to 212 (SSTASTANANPSGSGATSSAPPS) show a composition bias toward low complexity. ANK repeat units lie at residues 229–261 (DGDT…LLNI), 265–294 (VAQT…EPTV), 298–327 (HGNT…ATEI), 361–390 (DGER…DINA), and 395–424 (SGRT…KLNL). Residues threonine 293 and threonine 319 each carry the phosphothreonine; by PKC modification. Position 395 is a phosphoserine; by PKC (serine 395).

This sequence belongs to the NF-kappa-B inhibitor family. As to quaternary structure, phosphorylated isoform A binds to dorsal (dl); inhibits dl translocation to the nucleus and therefore from binding to DNA. In vitro, interacts with IKKbeta. Interacts with cactin and kappa-B-Ras. Post-translationally, activated IKKbeta phosphorylates cact. As to expression, expressed in ovary (at protein level).

It is found in the cytoplasm. In terms of biological role, involved in the formation of the dorsoventral pattern. It inhibits nuclear translocation of the dorsal morphogen in the dorsal region of the embryo. Acts as a negative regulator of the NF-kappa-B (rel) signaling pathway. Cact is degraded by IKKbeta, this is essential for NF-kappa-B (rel) activation. This chain is NF-kappa-B inhibitor cactus (cact), found in Drosophila melanogaster (Fruit fly).